A 332-amino-acid chain; its full sequence is Putative potassium channel regulatory protein sup-10 (332 aa).

A signal peptide spans 1–18; it reads MRYAVFIFLIVLIDLIYC. Topologically, residues 19 to 301 are extracellular; the sequence is WNSKRSFFIP…EISERNKRPA (283 aa). 3 N-linked (GlcNAc...) asparagine glycosylation sites follow: asparagine 61, asparagine 107, and asparagine 166. A helical transmembrane segment spans residues 302–322; sequence FVLVGLTGGIAVIILAFSIFW. The Cytoplasmic portion of the chain corresponds to 323-332; sequence GLNGSGFNKD.

May form a complex with sup-9 and unc-93 where sup-10 and unc-93 act as regulatory subunits of the two pore potassium channel sup-9. Sup-10 may regulate sup-9 via sup-18. In terms of tissue distribution, low levels in body-wall muscles, eight vulval muscles, intestinal muscles and anal depressor muscle.

The protein resides in the membrane. In terms of biological role, may contribute to coordination of muscle contraction as regulatory subunit of a nonessential potassium channel complex. The protein is Putative potassium channel regulatory protein sup-10 of Caenorhabditis elegans.